The chain runs to 268 residues: MQKLHREICGPVGLVPTMGYLHEGHLSLIRASKKQDLNTVASIFVNPTQFGPHEDFKKYPRDEKRDMAMLENAGVDYVFAPSVEEMYPPGFDSWVEPGVLQERLEGAVRPGHFRGVCTVVAKLFTIICPAKAYFGQKDYQQYLIIKKMASDLNLDVSVEMLPIVRESDGLALSSRNTYLSASERKAALVLYRSLLTAKSLFAAKEYNPEIIRRKMTEEIQRESLAEIDYVSLSDQDTLGEADKVSIKTIALVAARFGKTRLIDNMFLA.

Position 18–25 (18–25) interacts with ATP; the sequence is MGYLHEGH. Catalysis depends on histidine 25, which acts as the Proton donor. Residue glutamine 49 coordinates (R)-pantoate. Position 49 (glutamine 49) interacts with beta-alanine. Residue 135–138 coordinates ATP; the sequence is GQKD. Glutamine 141 is a binding site for (R)-pantoate. Residues valine 164 and 172–175 contribute to the ATP site; that span reads LSSR.

This sequence belongs to the pantothenate synthetase family. Homodimer.

It is found in the cytoplasm. It carries out the reaction (R)-pantoate + beta-alanine + ATP = (R)-pantothenate + AMP + diphosphate + H(+). Its pathway is cofactor biosynthesis; (R)-pantothenate biosynthesis; (R)-pantothenate from (R)-pantoate and beta-alanine: step 1/1. Functionally, catalyzes the condensation of pantoate with beta-alanine in an ATP-dependent reaction via a pantoyl-adenylate intermediate. The chain is Pantothenate synthetase from Dehalococcoides mccartyi (strain ATCC BAA-2266 / KCTC 15142 / 195) (Dehalococcoides ethenogenes (strain 195)).